The chain runs to 177 residues: MTTAIASDRLKKRFDRWDFDGNGALERADFEKEAQHIAEAFGKDAGAAEVQTLKNAFGGLFDYLAKEAGVGSDGSLTEEQFIRVTENLIFEQGEASFNRVLGPVVKGTWGMCDKNADGQINADEFAAWLTALGMSKAEAAEAFNQVDTNGNGELSLDELLTAVRDFHFGRLDVELLG.

EF-hand domains are found at residues isoleucine 5–alanine 40, alanine 45–phenylalanine 90, valine 100–methionine 134, and methionine 134–glycine 169. Ca(2+) contacts are provided by aspartate 18, aspartate 20, asparagine 22, and aspartate 29. Residues aspartate 113, asparagine 115, aspartate 117, glutamine 119, glutamate 124, aspartate 147, asparagine 149, asparagine 151, glutamate 153, and glutamate 158 each coordinate Ca(2+).

The chain is Calerythrin from Saccharopolyspora erythraea (Streptomyces erythraeus).